The chain runs to 333 residues: Ribonucleoside-diphosphate reductase small chain B (333 aa).

The Fe cation site is built by Asp76, Glu107, and His110. The active site involves Tyr114. Fe cation contacts are provided by Glu169, Glu203, and His206.

This sequence belongs to the ribonucleoside diphosphate reductase small chain family. As to quaternary structure, heterodimer of a large and a small chain. Fe cation is required as a cofactor. In terms of tissue distribution, expressed in roots, rosette leaves, stems and flowers.

The protein resides in the cytoplasm. It carries out the reaction a 2'-deoxyribonucleoside 5'-diphosphate + [thioredoxin]-disulfide + H2O = a ribonucleoside 5'-diphosphate + [thioredoxin]-dithiol. In terms of biological role, provides the precursors necessary for DNA synthesis. Catalyzes the biosynthesis of deoxyribonucleotides from the corresponding ribonucleotides. The chain is Ribonucleoside-diphosphate reductase small chain B (RNR2B) from Arabidopsis thaliana (Mouse-ear cress).